Here is a 209-residue protein sequence, read N- to C-terminus: 3-demethoxyubiquinol 3-hydroxylase (209 aa).

Fe cation is bound by residues Glu-58, Glu-88, His-91, Glu-140, Glu-172, and His-175.

The protein belongs to the COQ7 family. The cofactor is Fe cation.

The protein resides in the cell membrane. The catalysed reaction is a 5-methoxy-2-methyl-3-(all-trans-polyprenyl)benzene-1,4-diol + AH2 + O2 = a 3-demethylubiquinol + A + H2O. The protein operates within cofactor biosynthesis; ubiquinone biosynthesis. Catalyzes the hydroxylation of 2-nonaprenyl-3-methyl-6-methoxy-1,4-benzoquinol during ubiquinone biosynthesis. This chain is 3-demethoxyubiquinol 3-hydroxylase, found in Polaromonas sp. (strain JS666 / ATCC BAA-500).